The following is a 473-amino-acid chain: Glutamate--tRNA ligase (473 aa).

Residues 9 to 19 (PSPTGYLHVGG) carry the 'HIGH' region motif. 4 residues coordinate Zn(2+): cysteine 98, cysteine 100, cysteine 125, and aspartate 127. Residues 237-241 (KLSKR) carry the 'KMSKS' region motif. Lysine 240 is a binding site for ATP.

Belongs to the class-I aminoacyl-tRNA synthetase family. Glutamate--tRNA ligase type 1 subfamily. In terms of assembly, monomer. The cofactor is Zn(2+).

The protein localises to the cytoplasm. The enzyme catalyses tRNA(Glu) + L-glutamate + ATP = L-glutamyl-tRNA(Glu) + AMP + diphosphate. In terms of biological role, catalyzes the attachment of glutamate to tRNA(Glu) in a two-step reaction: glutamate is first activated by ATP to form Glu-AMP and then transferred to the acceptor end of tRNA(Glu). In Sodalis glossinidius (strain morsitans), this protein is Glutamate--tRNA ligase.